Reading from the N-terminus, the 331-residue chain is Protein C10 (331 aa).

This sequence belongs to the poxviridae C4/C10 protein family.

This Vaccinia virus (strain Western Reserve) (VACV) protein is Protein C10.